Consider the following 1483-residue polypeptide: Neuropathy target esterase sws (1483 aa).

Over 1 to 34 (MDVLELLRASANGCYNTLFSDAWFQYVSKQIATT) the chain is Lumenal. A helical transmembrane segment spans residues 35–55 (MYWYGALLVIGVLFIAWFLYF). The Cytoplasmic portion of the chain corresponds to 56 to 1483 (KRLARLRLRD…ENLTKTDTKN (1428 aa)). 174-301 (IFGHFEKPIF…IRVIQVIMIR (128 aa)) serves as a coordination point for a nucleoside 3',5'-cyclic phosphate. 2 disordered regions span residues 348-380 (ASRP…PNAN) and 404-440 (SSAV…GTSI). Positions 413–440 (GTRRSSTTYGPSGESPNGNANTAPGTSI) are enriched in polar residues. S418 and S424 each carry phosphoserine. Residues 456 to 585 (ELGL…VVRR) and 574 to 701 (IVLD…LSHR) contribute to the a nucleoside 3',5'-cyclic phosphate site. Positions 927-1093 (LVLGGGGARG…VNNLPGHLWR (167 aa)) constitute a PNPLA domain. The GXGXXG motif lies at 931 to 936 (GGGARG). The short motif at 958–962 (GVSIG) is the GXSXG element. The active-site Nucleophile is the S960. D1080 (proton acceptor) is an active-site residue. Residues 1080-1082 (DGG) carry the DGA/G motif. At S1174 the chain carries Phosphoserine. Residues 1349-1483 (DKATQSTPPT…ENLTKTDTKN (135 aa)) form a disordered region. Polar residues predominate over residues 1351 to 1373 (ATQSTPPTPNKQHALSPTSSQTN). Residues 1382-1396 (KPKEKQPSYDKLDRE) show a composition bias toward basic and acidic residues. Residues 1410 to 1419 (ERSSMQQRDS) are compositionally biased toward low complexity. Positions 1445–1458 (LNKPEQQPEQKPVP) are enriched in basic and acidic residues. Positions 1465–1474 (QKQQDQQQQE) are enriched in low complexity.

It belongs to the NTE family. Interacts with Pka-C3; interaction inhibits the catalytic function of Pka-C3 and the esterase activity of sws.

It localises to the endoplasmic reticulum membrane. The catalysed reaction is a 1-acyl-sn-glycero-3-phosphocholine + H2O = sn-glycerol 3-phosphocholine + a fatty acid + H(+). Its function is as follows. Phospholipase B that deacylates intracellular phosphatidylcholine (PtdCho), generating glycerophosphocholine (GroPtdCho). This deacylation occurs at both sn-2 and sn-1 positions of PtdCho. Its specific chemical modification by certain organophosphorus (OP) compounds leads to distal axonopathy. Plays a role in the signaling mechanism between neurons and glia that regulates glia wrapping during development of the adult brain. Essential for membrane lipid homeostasis and cell survival in both neurons and glia of the adult brain. The sequence is that of Neuropathy target esterase sws from Drosophila virilis (Fruit fly).